A 218-amino-acid polypeptide reads, in one-letter code: MRLRNKPWAVKLVNDHPESVLQNPNPDEKIYWEKRFGNDHPIEIEVGSGKGHFITTLAEQHPEKNFVALELQTTAAGIILRTKLKKGLDNLQILRGDAADINCFFDKNTTDVIYLNFSDPWPKSRHEKRRLTYKSFLNKYQQVLKPEGHIEFKTDNSGLFAYSVQSMNNYGMFFDFVSVDLHHEKPEIVEKNIETEYEHKFAAKGNPIYALHAHFETK.

Positions 45, 70, 97, and 119 each coordinate S-adenosyl-L-methionine. Residue aspartate 119 is part of the active site. Lysine 123 is a binding site for substrate. Residues 125 to 130 (RHEKRR) form an interaction with RNA region. Residues aspartate 155 and 195–198 (TEYE) each bind substrate.

This sequence belongs to the class I-like SAM-binding methyltransferase superfamily. TrmB family.

It catalyses the reaction guanosine(46) in tRNA + S-adenosyl-L-methionine = N(7)-methylguanosine(46) in tRNA + S-adenosyl-L-homocysteine. The protein operates within tRNA modification; N(7)-methylguanine-tRNA biosynthesis. Its function is as follows. Catalyzes the formation of N(7)-methylguanine at position 46 (m7G46) in tRNA. The chain is tRNA (guanine-N(7)-)-methyltransferase from Lactobacillus acidophilus (strain ATCC 700396 / NCK56 / N2 / NCFM).